Consider the following 339-residue polypeptide: D-erythrose-4-phosphate dehydrogenase (339 aa).

12-13 (RI) is a binding site for NAD(+). Residues 154–156 (SCT), Arg200, 213–214 (TK), and Arg236 each bind substrate. Cys155 functions as the Nucleophile in the catalytic mechanism. Asn318 is an NAD(+) binding site.

Belongs to the glyceraldehyde-3-phosphate dehydrogenase family. Epd subfamily. In terms of assembly, homotetramer.

It is found in the cytoplasm. It carries out the reaction D-erythrose 4-phosphate + NAD(+) + H2O = 4-phospho-D-erythronate + NADH + 2 H(+). It functions in the pathway cofactor biosynthesis; pyridoxine 5'-phosphate biosynthesis; pyridoxine 5'-phosphate from D-erythrose 4-phosphate: step 1/5. In terms of biological role, catalyzes the NAD-dependent conversion of D-erythrose 4-phosphate to 4-phosphoerythronate. This is D-erythrose-4-phosphate dehydrogenase from Enterobacter sp. (strain 638).